The sequence spans 612 residues: Zinc metalloproteinase-disintegrin-like 8 (612 aa).

The N-terminal stretch at methionine 1 to serine 20 is a signal peptide. A propeptide spanning residues isoleucine 21 to proline 189 is cleaved from the precursor. In terms of domain architecture, Peptidase M12B spans lysine 199 to proline 395. Position 202 (glutamate 202) interacts with Ca(2+). Asparagine 218 carries an N-linked (GlcNAc...) asparagine glycan. A Ca(2+)-binding site is contributed by aspartate 286. 3 disulfide bridges follow: cysteine 310–cysteine 390, cysteine 350–cysteine 374, and cysteine 352–cysteine 357. Histidine 335 serves as a coordination point for Zn(2+). Glutamate 336 is a catalytic residue. The Zn(2+) site is built by histidine 339 and histidine 345. Positions 390, 393, 405, 408, 410, 412, 415, and 418 each coordinate Ca(2+). Residues proline 403–asparagine 489 form the Disintegrin domain. Intrachain disulfides connect cysteine 406–cysteine 435, cysteine 417–cysteine 430, cysteine 419–cysteine 425, cysteine 429–cysteine 452, cysteine 443–cysteine 449, cysteine 448–cysteine 474, cysteine 461–cysteine 481, cysteine 468–cysteine 500, cysteine 493–cysteine 505, cysteine 512–cysteine 562, cysteine 527–cysteine 573, cysteine 540–cysteine 550, cysteine 557–cysteine 599, and cysteine 593–cysteine 605. The D/ECD-tripeptide signature appears at glutamate 467 to aspartate 469. A glycan (N-linked (GlcNAc...) asparagine) is linked at asparagine 502.

It belongs to the venom metalloproteinase (M12B) family. P-III subfamily. Zn(2+) serves as cofactor. Expressed by the venom gland.

The protein resides in the secreted. In terms of biological role, snake venom metalloproteinase that impairs hemostasis in the envenomed animal. The sequence is that of Zinc metalloproteinase-disintegrin-like 8 from Crotalus adamanteus (Eastern diamondback rattlesnake).